Here is an 815-residue protein sequence, read N- to C-terminus: Cell division control protein 48 homolog D (815 aa).

Ala2 is modified (N-acetylalanine). The residue at position 42 (Ser42) is a Phosphoserine. ATP-binding positions include 249-256 (GPPGSGKT) and 522-529 (GPPGCGKT). Residue Ser720 is modified to Phosphoserine. Residues 772–815 (GSEFRFPDAPTGTTGAFPGAAATVGGVDPFATSGGAADDDDLYS) form a disordered region. Residues 780 to 798 (APTGTTGAFPGAAATVGGV) show a composition bias toward low complexity.

Belongs to the AAA ATPase family.

It localises to the nucleus. It is found in the cytoplasm. The protein localises to the cytoskeleton. The protein resides in the phragmoplast. In terms of biological role, probably functions in cell division and growth processes. Interacts with certain SNAREs as part of specialized membrane fusion events where vesicles from the same organelle fuse (homotypic fusion). The chain is Cell division control protein 48 homolog D (CDC48D) from Arabidopsis thaliana (Mouse-ear cress).